We begin with the raw amino-acid sequence, 479 residues long: Ribulose bisphosphate carboxylase large chain (479 aa).

Positions 1 to 2 are excised as a propeptide; the sequence is MS. Substrate-binding residues include Asn-123 and Thr-173. Lys-175 (proton acceptor) is an active-site residue. Lys-177 provides a ligand contact to substrate. Positions 201, 203, and 204 each coordinate Mg(2+). At Lys-201 the chain carries N6-carboxylysine. Position 208 is a phosphoserine (Ser-208). Catalysis depends on His-294, which acts as the Proton acceptor. The substrate site is built by Arg-295 and His-327. Thr-330 is subject to Phosphothreonine. Ser-379 provides a ligand contact to substrate.

This sequence belongs to the RuBisCO large chain family. Type I subfamily. As to quaternary structure, heterohexadecamer of 8 large chains and 8 small chains; disulfide-linked. The disulfide link is formed within the large subunit homodimers. Mg(2+) is required as a cofactor. Post-translationally, the disulfide bond which can form in the large chain dimeric partners within the hexadecamer appears to be associated with oxidative stress and protein turnover.

It is found in the plastid. The protein resides in the chloroplast. The enzyme catalyses 2 (2R)-3-phosphoglycerate + 2 H(+) = D-ribulose 1,5-bisphosphate + CO2 + H2O. It carries out the reaction D-ribulose 1,5-bisphosphate + O2 = 2-phosphoglycolate + (2R)-3-phosphoglycerate + 2 H(+). In terms of biological role, ruBisCO catalyzes two reactions: the carboxylation of D-ribulose 1,5-bisphosphate, the primary event in carbon dioxide fixation, as well as the oxidative fragmentation of the pentose substrate in the photorespiration process. Both reactions occur simultaneously and in competition at the same active site. The sequence is that of Ribulose bisphosphate carboxylase large chain from Crucihimalaya wallichii (Rock-cress).